The sequence spans 620 residues: Protein phosphatase 2C-like domain-containing protein 1 (620 aa).

The PPM-type phosphatase domain maps to 173-611; the sequence is GIAICSNNNS…DSITVMVMFL (439 aa).

It belongs to the PP2C family.

The polypeptide is Protein phosphatase 2C-like domain-containing protein 1 (Pp2d1) (Mus musculus (Mouse)).